The primary structure comprises 1018 residues: 2-oxoglutarate dehydrogenase-like, mitochondrial (1018 aa).

Residues His-138, Asp-151, and Asp-153 each coordinate Ca(2+). Thiamine diphosphate contacts are provided by Arg-307, Asp-406, Asn-439, Ile-441, and Gln-671. Mg(2+) contacts are provided by Asp-406, Asn-439, and Ile-441.

Belongs to the alpha-ketoglutarate dehydrogenase family. The OGDHC complex comprises multiple copies of three catalytic enzyme components, the 2-oxoglutarate dehydrogenase (OGDH/E1), the dihydrolipoamide dehydrogenase (DLST/E2) and the dihydrolipoamide dehydrogenase (DLD/E3). OGDHL/E1-like isoenzyme may replace OGDH in the OGDHC complex in the brain. The cofactor is thiamine diphosphate. Mg(2+) serves as cofactor.

It localises to the mitochondrion matrix. It carries out the reaction N(6)-[(R)-lipoyl]-L-lysyl-[protein] + 2-oxoglutarate + H(+) = N(6)-[(R)-S(8)-succinyldihydrolipoyl]-L-lysyl-[protein] + CO2. Functionally, 2-oxoglutarate dehydrogenase (E1-like) component of the 2-oxoglutarate dehydrogenase multienzyme complex (OGDHC) which mediates the decarboxylation of alpha-ketoglutarate in the tricarboxylic acid cycle. The OGDHC complex catalyzes the overall conversion of 2-oxoglutarate to succinyl-CoA and CO(2) while reducing NAD(+) to NADH. The OGDHC complex is mainly active in the mitochondrion. Involved in the inhibition of cell proliferation and in apoptosis. The protein is 2-oxoglutarate dehydrogenase-like, mitochondrial (ogdhl) of Xenopus laevis (African clawed frog).